A 329-amino-acid chain; its full sequence is Delta-aminolevulinic acid dehydratase (329 aa).

The Zn(2+) site is built by Cys-122, Cys-124, His-131, and Cys-132. Lys-199 serves as the catalytic Schiff-base intermediate with substrate. An N6-succinyllysine modification is found at Lys-199. Residue Arg-209 coordinates 5-aminolevulinate. At Ser-215 the chain carries Phosphoserine. Arg-221 provides a ligand contact to 5-aminolevulinate. Cys-223 provides a ligand contact to Zn(2+). Residue Lys-252 is the Schiff-base intermediate with substrate of the active site. The residue at position 252 (Lys-252) is an N6-succinyllysine. 5-aminolevulinate is bound by residues Ser-279 and Tyr-318.

It belongs to the ALAD family. As to quaternary structure, homooctamer; active form. Homohexamer; low activity form. It depends on Zn(2+) as a cofactor.

The protein resides in the cytoplasm. It localises to the cytosol. It carries out the reaction 2 5-aminolevulinate = porphobilinogen + 2 H2O + H(+). It participates in porphyrin-containing compound metabolism; protoporphyrin-IX biosynthesis; coproporphyrinogen-III from 5-aminolevulinate: step 1/4. Its activity is regulated as follows. Can alternate between a fully active homooctamer and a low-activity homohexamer. A bound magnesium ion may promote the assembly of the fully active homooctamer. The magnesium-binding site is absent in the low-activity homohexamer. Inhibited by compounds that favor the hexameric state. Inhibited by divalent lead ions. The lead ions partially displace the zinc cofactor. Its function is as follows. Catalyzes an early step in the biosynthesis of tetrapyrroles. Binds two molecules of 5-aminolevulinate per subunit, each at a distinct site, and catalyzes their condensation to form porphobilinogen. The polypeptide is Delta-aminolevulinic acid dehydratase (ALAD) (Bos taurus (Bovine)).